A 401-amino-acid chain; its full sequence is Imidazolonepropionase (401 aa).

Fe(3+) is bound by residues H66 and H68. The Zn(2+) site is built by H66 and H68. 4-imidazolone-5-propanoate contacts are provided by R75, Y138, and H171. Y138 contributes to the N-formimidoyl-L-glutamate binding site. H236 contributes to the Fe(3+) binding site. H236 provides a ligand contact to Zn(2+). Q239 contacts 4-imidazolone-5-propanoate. D311 lines the Fe(3+) pocket. Position 311 (D311) interacts with Zn(2+). N-formimidoyl-L-glutamate contacts are provided by N313 and G315. T316 provides a ligand contact to 4-imidazolone-5-propanoate.

Belongs to the metallo-dependent hydrolases superfamily. HutI family. It depends on Zn(2+) as a cofactor. Requires Fe(3+) as cofactor.

Its subcellular location is the cytoplasm. It carries out the reaction 4-imidazolone-5-propanoate + H2O = N-formimidoyl-L-glutamate. It functions in the pathway amino-acid degradation; L-histidine degradation into L-glutamate; N-formimidoyl-L-glutamate from L-histidine: step 3/3. In terms of biological role, catalyzes the hydrolytic cleavage of the carbon-nitrogen bond in imidazolone-5-propanoate to yield N-formimidoyl-L-glutamate. It is the third step in the universal histidine degradation pathway. This chain is Imidazolonepropionase, found in Pseudomonas savastanoi pv. phaseolicola (strain 1448A / Race 6) (Pseudomonas syringae pv. phaseolicola (strain 1448A / Race 6)).